The primary structure comprises 376 residues: DnaJ homolog subfamily B member 12 (376 aa).

N-acetylmethionine is present on M1. Positions 45-97 (ALIESLNQKPQSTGDHPQPTDTTHTTTKKAGGTETPSANGEAGGGESAKGYTS) are disordered. A compositionally biased stretch (low complexity) spans 57 to 84 (TGDHPQPTDTTHTTTKKAGGTETPSANG). In terms of domain architecture, J spans 111 to 175 (DYYEILGVSR…EKRKQYDQFG (65 aa)). The residue at position 186 (H186) is a Pros-methylhistidine. The chain crosses the membrane as a helical span at residues 243–263 (GGLGVFVQLMPILILILVSAL).

The protein belongs to the DnaJ family. DNAJB12/DNAJB14 subfamily. Homodimer and homotetramer. Interacts (via J domain) with HSPA8/Hsc70. Forms a multiprotein complex, at least composed of DNAJB12, DNAJB14, HSPA8/Hsc70 and SGTA; interaction with DNAJB14 and HSPA8/Hsc70 is direct. Post-translationally, methylated at His-186 by METTL9.

It localises to the endoplasmic reticulum membrane. The protein localises to the nucleus membrane. Functionally, acts as a co-chaperone with HSPA8/Hsc70; required to promote protein folding and trafficking, prevent aggregation of client proteins, and promote unfolded proteins to endoplasmic reticulum-associated degradation (ERAD) pathway. Acts by determining HSPA8/Hsc70's ATPase and polypeptide-binding activities. Can also act independently of HSPA8/Hsc70: together with DNAJB14, acts as a chaperone that promotes maturation of potassium channels KCND2 and KCNH2 by stabilizing nascent channel subunits and assembling them into tetramers. While stabilization of nascent channel proteins is dependent on HSPA8/Hsc70, the process of oligomerization of channel subunits is independent of HSPA8/Hsc70. When overexpressed, forms membranous structures together with DNAJB14 and HSPA8/Hsc70 within the nucleus; the role of these structures, named DJANGOs, is still unclear. This Mus musculus (Mouse) protein is DnaJ homolog subfamily B member 12.